Reading from the N-terminus, the 547-residue chain is Putative HMP/thiamine import ATP-binding protein YkoD (547 aa).

ABC transporter domains lie at 8–250 (LTVE…KLGI) and 295–523 (LEVS…KAKL). Residues 42–49 (GPSGCGKS) and 327–334 (GPNGTGKS) contribute to the ATP site.

The protein belongs to the ABC transporter superfamily. The complex is composed of two ATP-binding proteins (YkoD), two transmembrane proteins (YkoC and YkoE) and a solute-binding protein (YkoF).

The protein localises to the cell membrane. Part of the ABC transporter complex YkoCDEF that could transport hydroxymethylpyrimidine (HMP) and/or thiamine. Could also transport other HMP-containing products. Responsible for energy coupling to the transport system. In Bacillus subtilis (strain 168), this protein is Putative HMP/thiamine import ATP-binding protein YkoD (ykoD).